The following is a 459-amino-acid chain: Exodeoxyribonuclease 7 large subunit (459 aa).

Belongs to the XseA family. In terms of assembly, heterooligomer composed of large and small subunits.

The protein resides in the cytoplasm. It catalyses the reaction Exonucleolytic cleavage in either 5'- to 3'- or 3'- to 5'-direction to yield nucleoside 5'-phosphates.. Functionally, bidirectionally degrades single-stranded DNA into large acid-insoluble oligonucleotides, which are then degraded further into small acid-soluble oligonucleotides. In Pseudomonas aeruginosa (strain LESB58), this protein is Exodeoxyribonuclease 7 large subunit.